We begin with the raw amino-acid sequence, 337 residues long: Holliday junction branch migration complex subunit RuvB (337 aa).

The segment at 4-184 (ADRLIQPQVL…FGIPLRLEFY (181 aa)) is large ATPase domain (RuvB-L). Residues Arg-24, Gly-65, Lys-68, Thr-69, Thr-70, 131 to 133 (EDY), Arg-174, Tyr-184, and Arg-221 each bind ATP. Thr-69 provides a ligand contact to Mg(2+). Residues 185–255 (NVKDLCTIVT…VAQQALDMLD (71 aa)) form a small ATPAse domain (RuvB-S) region. The tract at residues 258–337 (QEGFDYLDRK…FNIITPDVPK (80 aa)) is head domain (RuvB-H). Residues Arg-294, Arg-313, and Arg-318 each contribute to the DNA site.

The protein belongs to the RuvB family. As to quaternary structure, homohexamer. Forms an RuvA(8)-RuvB(12)-Holliday junction (HJ) complex. HJ DNA is sandwiched between 2 RuvA tetramers; dsDNA enters through RuvA and exits via RuvB. An RuvB hexamer assembles on each DNA strand where it exits the tetramer. Each RuvB hexamer is contacted by two RuvA subunits (via domain III) on 2 adjacent RuvB subunits; this complex drives branch migration. In the full resolvosome a probable DNA-RuvA(4)-RuvB(12)-RuvC(2) complex forms which resolves the HJ.

It localises to the cytoplasm. The enzyme catalyses ATP + H2O = ADP + phosphate + H(+). In terms of biological role, the RuvA-RuvB-RuvC complex processes Holliday junction (HJ) DNA during genetic recombination and DNA repair, while the RuvA-RuvB complex plays an important role in the rescue of blocked DNA replication forks via replication fork reversal (RFR). RuvA specifically binds to HJ cruciform DNA, conferring on it an open structure. The RuvB hexamer acts as an ATP-dependent pump, pulling dsDNA into and through the RuvAB complex. RuvB forms 2 homohexamers on either side of HJ DNA bound by 1 or 2 RuvA tetramers; 4 subunits per hexamer contact DNA at a time. Coordinated motions by a converter formed by DNA-disengaged RuvB subunits stimulates ATP hydrolysis and nucleotide exchange. Immobilization of the converter enables RuvB to convert the ATP-contained energy into a lever motion, pulling 2 nucleotides of DNA out of the RuvA tetramer per ATP hydrolyzed, thus driving DNA branch migration. The RuvB motors rotate together with the DNA substrate, which together with the progressing nucleotide cycle form the mechanistic basis for DNA recombination by continuous HJ branch migration. Branch migration allows RuvC to scan DNA until it finds its consensus sequence, where it cleaves and resolves cruciform DNA. The polypeptide is Holliday junction branch migration complex subunit RuvB (Shewanella denitrificans (strain OS217 / ATCC BAA-1090 / DSM 15013)).